Reading from the N-terminus, the 238-residue chain is MSASPDYKTNLLSHLISNKVLSFGSYTLKSGRNSPYFFTTTLLHTAPLLHATASACASVLSSPPFVTTSTPDGTPRPNFDIIFGPAYKGIPLCTAVLNELGVRDTTGAWNNISYSFNRKEAKAHGEGGNIVGAPLKGKKIVIIDDVITAGTALREAVGIIEKEGGTVVGVLVLLDREERVNDNEKKSAVGCAQRDLGENVPVKAVLSLSDIIEKLGNDIGEENLKRLKEYRAQYGAEE.

K29 is a 5-phospho-alpha-D-ribose 1-diphosphate binding site. 37–38 (FF) contacts orotate. Residues 87-88 (YK), R118, K119, K122, H124, and 144-152 (DDVITAGTA) each bind 5-phospho-alpha-D-ribose 1-diphosphate. T148 and R176 together coordinate orotate.

Belongs to the purine/pyrimidine phosphoribosyltransferase family. PyrE subfamily. In terms of assembly, homodimer.

It catalyses the reaction orotidine 5'-phosphate + diphosphate = orotate + 5-phospho-alpha-D-ribose 1-diphosphate. It participates in pyrimidine metabolism; UMP biosynthesis via de novo pathway; UMP from orotate: step 1/2. Functionally, catalyzes the transfer of a ribosyl phosphate group from 5-phosphoribose 1-diphosphate to orotate, leading to the formation of orotidine monophosphate (OMP). The sequence is that of Orotate phosphoribosyltransferase (URA5) from Coccidioides immitis (strain RS) (Valley fever fungus).